Consider the following 402-residue polypeptide: NAD-dependent protein deacetylase sirtuin-7 (402 aa).

Residues 1 to 23 (MAAGGGLSRSERKAAERVRRLRE) are disordered. Over residues 9–23 (RSERKAAERVRRLRE) the composition is skewed to basic and acidic residues. One can recognise a Deacetylase sirtuin-type domain in the interval 83 to 330 (PEELRRKVRE…QLLMNELGLE (248 aa)). NAD(+)-binding positions include 108–127 (GAGI…NGVW) and 168–171 (QNCD). The active-site Proton acceptor is histidine 188. Zn(2+) contacts are provided by cysteine 196, cysteine 199, cysteine 226, and cysteine 229. Residues 269-271 (GSS), 298-300 (NLQ), and cysteine 316 contribute to the NAD(+) site. The interval 355–402 (SHSRKSLCRSREEAPPGDQSDPLASAPPILGGWFGRGCAKRAKRKKVA) is disordered. Arginine 390 is modified (asymmetric dimethylarginine; alternate). Omega-N-methylarginine; alternate is present on arginine 390. Residues 392–402 (CAKRAKRKKVA) are compositionally biased toward basic residues.

It belongs to the sirtuin family. Class IV subfamily. In terms of assembly, interacts with UBTF and the RNA polymerase I complex. Interacts with components of the B-WICH complex, such as MYBBP1A, SMARCA5/SNF2H and BAZ1B/WSTF. Interacts with ELK4, leading to stabilization at target promoters for H3K18Ac deacetylation. Interacts with histone H2A and/or histone H2B. Interacts with DNMT1. Interacts with SIRT1. The cofactor is Zn(2+). In terms of processing, phosphorylated during mitosis. Post-translationally, methylation at Arg-390 by PRMT6 inhibits the H3K18Ac histone deacetylase activity, promoting mitochondria biogenesis and maintaining mitochondria respiration. Ubiquitinated via 'Lys-63'-linked ubiquitin chains. Deubiquitinated by USP7, inhibiting the H3K18Ac histone deacetylase activity and regulating gluconeogenesis. Ubiquitinated by E3 ubiquitin-protein ligase complex containing FBXO7; leading to proteasomal degradation. In terms of tissue distribution, detected in liver, spleen and testis. Detected in embryos.

It localises to the nucleus. Its subcellular location is the nucleolus. The protein localises to the nucleoplasm. The protein resides in the chromosome. It is found in the cytoplasm. It carries out the reaction N(6)-acetyl-L-lysyl-[protein] + NAD(+) + H2O = 2''-O-acetyl-ADP-D-ribose + nicotinamide + L-lysyl-[protein]. The enzyme catalyses N(6)-glutaryl-L-lysyl-[protein] + NAD(+) + H2O = 2''-O-glutaryl-ADP-D-ribose + nicotinamide + L-lysyl-[protein]. The catalysed reaction is N(6)-succinyl-L-lysyl-[protein] + NAD(+) + H2O = 2''-O-succinyl-ADP-D-ribose + nicotinamide + L-lysyl-[protein]. It catalyses the reaction N(6)-propanoyl-L-lysyl-[protein] + NAD(+) + H2O = 3''-O-propanoyl-ADP-D-ribose + nicotinamide + L-lysyl-[protein]. It carries out the reaction N(6)-decanoyl-L-lysyl-[protein] + NAD(+) + H2O = 2''-O-decanoyl-ADP-D-ribose + nicotinamide + L-lysyl-[protein]. NAD-dependent protein-lysine deacetylase and deacylase activities are activated by nucleic acids. Histone deacetylase activity is activated by DNA. Protein-lysine deacylase activity is activated by RNA. H3K18Ac histone deacetylase activity is inhibited by methylation at Arg-390. H3K18Ac histone deacetylase activity is inhibited by deubiquitination by USP7. NAD-dependent protein-lysine deacylase that can act both as a deacetylase or deacylase (desuccinylase, depropionylase and deglutarylase), depending on the context. Also acts as a dedecanoylase. Specifically mediates deacetylation of histone H3 at 'Lys-18' (H3K18Ac). In contrast to other histone deacetylases, displays strong preference for a specific histone mark, H3K18Ac, directly linked to control of gene expression. H3K18Ac is mainly present around the transcription start site of genes and has been linked to activation of nuclear hormone receptors; SIRT7 thereby acts as a transcription repressor. Moreover, H3K18 hypoacetylation has been reported as a marker of malignancy in various cancers and seems to maintain the transformed phenotype of cancer cells. Also able to mediate deacetylation of histone H3 at 'Lys-36' (H3K36Ac) in the context of nucleosomes. Also mediates deacetylation of non-histone proteins, such as ATM, CDK9, DDX21, DDB1, FBL, FKBP5/FKBP51, GABPB1, RAN, RRP9/U3-55K and POLR1E/PAF53. Enriched in nucleolus where it stimulates transcription activity of the RNA polymerase I complex. Acts by mediating the deacetylation of the RNA polymerase I subunit POLR1E/PAF53, thereby promoting the association of RNA polymerase I with the rDNA promoter region and coding region. In response to metabolic stress, SIRT7 is released from nucleoli leading to hyperacetylation of POLR1E/PAF53 and decreased RNA polymerase I transcription. Required to restore the transcription of ribosomal RNA (rRNA) at the exit from mitosis. Promotes pre-ribosomal RNA (pre-rRNA) cleavage at the 5'-terminal processing site by mediating deacetylation of RRP9/U3-55K, a core subunit of the U3 snoRNP complex. Mediates 'Lys-37' deacetylation of Ran, thereby regulating the nuclear export of NF-kappa-B subunit RELA/p65. Acts as a regulator of DNA damage repair by mediating deacetylation of ATM during the late stages of DNA damage response, promoting ATM dephosphorylation and deactivation. May also deacetylate p53/TP53 and promotes cell survival, however such data need additional confirmation. Suppresses the activity of the DCX (DDB1-CUL4-X-box) E3 ubiquitin-protein ligase complexes by mediating deacetylation of DDB1, which prevents the interaction between DDB1 and CUL4 (CUL4A or CUL4B). Activates RNA polymerase II transcription by mediating deacetylation of CDK9, thereby promoting 'Ser-2' phosphorylation of the C-terminal domain (CTD) of RNA polymerase II. Deacetylates FBL, promoting histone-glutamine methyltransferase activity of FBL. Acts as a regulator of mitochondrial function by catalyzing deacetylation of GABPB1. Regulates Akt/AKT1 activity by mediating deacetylation of FKBP5/FKBP51. Required to prevent R-loop-associated DNA damage and transcription-associated genomic instability by mediating deacetylation and subsequent activation of DDX21, thereby overcoming R-loop-mediated stalling of RNA polymerases. In addition to protein deacetylase activity, also acts as protein-lysine deacylase. Acts as a protein depropionylase by mediating depropionylation of Osterix (SP7), thereby regulating bone formation by osteoblasts. Acts as a histone deglutarylase by mediating deglutarylation of histone H4 on 'Lys-91' (H4K91glu); a mark that destabilizes nucleosomes by promoting dissociation of the H2A-H2B dimers from nucleosomes. Acts as a histone desuccinylase: in response to DNA damage, recruited to DNA double-strand breaks (DSBs) and catalyzes desuccinylation of histone H3 on 'Lys-122' (H3K122succ), thereby promoting chromatin condensation and DSB repair. Also promotes DSB repair by promoting H3K18Ac deacetylation, regulating non-homologous end joining (NHEJ). Along with its role in DNA repair, required for chromosome synapsis during prophase I of female meiosis by catalyzing H3K18Ac deacetylation. Involved in transcriptional repression of LINE-1 retrotransposon via H3K18Ac deacetylation, and promotes their association with the nuclear lamina. Required to stabilize ribosomal DNA (rDNA) heterochromatin and prevent cellular senescence induced by rDNA instability. Acts as a negative regulator of SIRT1 by preventing autodeacetylation of SIRT1, restricting SIRT1 deacetylase activity. This chain is NAD-dependent protein deacetylase sirtuin-7, found in Mus musculus (Mouse).